The chain runs to 178 residues: MPLRPGRCYRHFSGPAYTRKEYIPGIPQPKITKFTSGNPNGDYDYEVRLITTEIGQIRHNALEAVRTLTLKTLSKKTGSETSFFMWILKYPHHVLRENKMMAFAGADRLQDGMRLSFGTPIGTAARIEKLGETLIVIKVKKEHLEFAKEALKIASKKLPLRTRIEIIPLRLVRQEVQS.

It belongs to the universal ribosomal protein uL16 family.

This Saccharolobus solfataricus (strain ATCC 35092 / DSM 1617 / JCM 11322 / P2) (Sulfolobus solfataricus) protein is Large ribosomal subunit protein uL16.